The sequence spans 212 residues: Anaphase-promoting complex subunit 10 (212 aa).

The DOC domain occupies 12–196 (MDEEERTSSR…PSAVLEARPG (185 aa)).

Belongs to the APC10 family. The APC/C complex is probably composed of at least 12 subunits: apc-2, apc-10, apc-11, cdc-26, emb-1, emb-27, emb-30, mat-1, mat-2, mat-3, such-1 and gfi-3.

The protein operates within protein modification; protein ubiquitination. Probable component of the anaphase promoting complex/cyclosome (APC/C), a cell cycle-regulated E3 ubiquitin ligase that controls progression through mitosis and the G1 phase of the cell cycle. The APC/C complex acts by mediating ubiquitination and subsequent degradation of target proteins. This Caenorhabditis elegans protein is Anaphase-promoting complex subunit 10.